We begin with the raw amino-acid sequence, 456 residues long: 26S proteasome non-ATPase regulatory subunit 12 (456 aa).

A2 carries the post-translational modification N-acetylalanine. A Glycyl lysine isopeptide (Lys-Gly) (interchain with G-Cter in SUMO1); alternate cross-link involves residue K92. K92 is covalently cross-linked (Glycyl lysine isopeptide (Lys-Gly) (interchain with G-Cter in SUMO2); alternate). A PCI domain is found at 242-420 (SICKHYRAIY…GVINFQRPKD (179 aa)). An N6-acetyllysine modification is found at K368.

Belongs to the proteasome subunit p55 family. In terms of assembly, component of the 19S proteasome regulatory particle complex. The 26S proteasome consists of a 20S core particle (CP) and two 19S regulatory subunits (RP). The regulatory particle is made of a lid composed of 9 subunits including PSMD12, a base containing 6 ATPases and few additional components. Interacts with ERCC6.

Functionally, component of the 26S proteasome, a multiprotein complex involved in the ATP-dependent degradation of ubiquitinated proteins. This complex plays a key role in the maintenance of protein homeostasis by removing misfolded or damaged proteins, which could impair cellular functions, and by removing proteins whose functions are no longer required. Therefore, the proteasome participates in numerous cellular processes, including cell cycle progression, apoptosis, or DNA damage repair. This is 26S proteasome non-ATPase regulatory subunit 12 (Psmd12) from Mus musculus (Mouse).